The sequence spans 845 residues: Dynein axonemal assembly factor 5 (845 aa).

HEAT repeat units lie at residues 47–84 (DVFDKLYLHLLKCYEDRFESVRSKAIQVVSAFLSSLPP), 138–175 (ECYPLVVKILIKSIKDDYPVVQREGCSAVVTLSRLADT), 180–217 (PFTESILLPLYTMLNHKHAQARISAIQAIARLSLHMDA), 260–297 (SFFERILPLVLCCLKDESPEVLNHIYPQWLKCGIQYFN), 332–369 (QRSLRLLQLITRETSDWKDNVRLHALKLLYQFVLHAEA), 523–561 (NFGQTLIEKMVKLLNTSVPKIHERWFHLALQDVINLDAA), 674–715 (SESV…MSVE), and 766–803 (AIVKRAMDLLLLYHESPEKDMRAAVAVTLKVLAKSHPE).

The protein belongs to the DNAAF5 family. As to expression, expressed in testis.

It localises to the cytoplasm. The protein resides in the dynein axonemal particle. Cytoplasmic protein involved in the delivery of the dynein machinery to the motile cilium. It is required for the assembly of the axonemal dynein inner and outer arms, two structures attached to the peripheral outer doublet A microtubule of the axoneme, that play a crucial role in cilium motility. In Drosophila melanogaster (Fruit fly), this protein is Dynein axonemal assembly factor 5.